Consider the following 666-residue polypeptide: Protein OS-9 (666 aa).

An N-terminal signal peptide occupies residues 1–30; that stretch reads MAAEALLSSLLGLLFLGLLLPAHLTGGVGS. The MRH domain occupies 108–230; it reads APCLLKTKDW…SIRTSRLCPH (123 aa). Cys-110 and Cys-123 are joined by a disulfide. Trp-117, Trp-118, and Gln-130 together coordinate a mannooligosaccharide derivative. Asn-177 carries N-linked (GlcNAc...) asparagine glycosylation. Intrachain disulfides connect Cys-181/Cys-216 and Cys-196/Cys-228. The a mannooligosaccharide derivative site is built by Asp-182, Arg-188, Glu-212, and Tyr-218. Disordered stretches follow at residues 261-356, 370-449, 505-540, and 631-666; these read RQAE…NVQV, EELK…SDRE, ESQSPELVQKYKKRRVVPQKPPPSPHPTEEEPEHRV, and EANKERQRQSELESNYRRVWGSPGGEDTGDLDEFDF. 2 stretches are compositionally biased toward basic and acidic residues: residues 263-281 and 294-310; these read AESKQHEEKVTEEVQDTDH and PKKEDVSPTKEDKESEF. Low complexity predominate over residues 320–332; it reads QATGTEEAQAGEQ. Composition is skewed to basic and acidic residues over residues 370–379 and 395–412; these read EELKGAEKGK and PQREAEAKGKGGEPRGLV. Residues 413-429 are compositionally biased toward acidic residues; that stretch reads EEEDGDEEEEDEDEDEQ. Over residues 434–449 the composition is skewed to basic and acidic residues; that stretch reads EFEKELEGMLLPSDRE. Residues 631-646 show a composition bias toward basic and acidic residues; that stretch reads EANKERQRQSELESNY. A compositionally biased stretch (acidic residues) spans 657–666; it reads DTGDLDEFDF.

It belongs to the OS-9 family. Component of the HRD1 complex, which comprises at least SYNV1/HRD1, DERL1/2, FAM8A1, HERPUD1/HERP, OS9, SEL1L and UBE2J1. FAM8A1 is stabilized by interaction with SYNV1, which prevents its proteasomal degradation. OS9 and UBE2J1 recruitment to the complex may be mediated by SEL1L. Through this complex, may interact with ERLEC1 and HSPA5. Interacts (via C-terminus) with CPNE6 (via second C2 domain); this interaction occurs in a calcium-dependent manner in vitro. Interacts with CREB3. Post-translationally, intramolecular disulfide bonds.

The protein resides in the endoplasmic reticulum lumen. In terms of biological role, lectin component of the HRD1 complex, which functions in endoplasmic reticulum (ER) quality control and ER-associated degradation (ERAD). Specifically recognizes and binds improperly folded glycoproteins as well as hyperglycosylated proteins, retain them in the ER, and transfers them to the ubiquitination machinery and promote their degradation. Possible targets include TRPV4 as well as hyperglycosylated HSP90B1. The polypeptide is Protein OS-9 (Os9) (Rattus norvegicus (Rat)).